We begin with the raw amino-acid sequence, 1394 residues long: Kinesin-like protein KIF27 (1394 aa).

The region spanning 5 to 341 is the Kinesin motor domain; the sequence is PIKVAVRIRP…LKYANRARNI (337 aa). Residue 84–91 coordinates ATP; it reads GQTGSGKT. Coiled-coil stretches lie at residues 352-418 and 498-554; these read QADR…IEQA and QKDL…ELAK. 2 disordered regions span residues 559–582 and 642–665; these read VPTS…RPHT and FSDN…RSHS. A compositionally biased stretch (basic and acidic residues) spans 571 to 580; that stretch reads PDARASEKRP. Phosphoserine is present on residues Ser-643, Ser-646, Ser-672, Ser-675, and Ser-704. Coiled coils occupy residues 709 to 891, 921 to 1078, 1118 to 1152, and 1186 to 1226; these read LQKL…GQGE, LDEQ…SIQS, NKVI…HELE, and DQDG…RLKD. Residues 886 to 916 form a disordered region; sequence KAGQGEGLNPKAEDQDGFNLNRRKSPFRSGD. At Ser-999 the chain carries Phosphoserine. Positions 1267–1280 are enriched in basic and acidic residues; the sequence is TENTKLNGSEREVD. 2 disordered regions span residues 1267 to 1319 and 1325 to 1344; these read TENT…LQSI and ARPF…PVRS. 2 stretches are compositionally biased toward polar residues: residues 1281–1295 and 1309–1319; these read NSSS…TQQI and IAPSSGQLQSI. Phosphoserine is present on residues Ser-1365 and Ser-1387.

It belongs to the TRAFAC class myosin-kinesin ATPase superfamily. Kinesin family. KIF27 subfamily. As to quaternary structure, interacts with STK36.

It localises to the cytoplasm. The protein resides in the cytoskeleton. The protein localises to the cell projection. It is found in the cilium. Plays an essential role in motile ciliogenesis. This is Kinesin-like protein KIF27 (Kif27) from Mus musculus (Mouse).